A 114-amino-acid polypeptide reads, in one-letter code: Probable 4-amino-4-deoxy-L-arabinose-phosphoundecaprenol flippase subunit ArnE (114 aa).

The next 3 helical transmembrane spans lie at 38–58 (LTLRWLAIAVVSLGLGMLLWL), 64–84 (LPLSVAYPMLSFNFVLVTLAA), and 94–114 (LRHWLGVAAIMFGILLMSWHL). An EamA domain is found at 43–112 (LAIAVVSLGL…IMFGILLMSW (70 aa)).

This sequence belongs to the ArnE family. Heterodimer of ArnE and ArnF.

It localises to the cell inner membrane. It functions in the pathway bacterial outer membrane biogenesis; lipopolysaccharide biosynthesis. Its function is as follows. Translocates 4-amino-4-deoxy-L-arabinose-phosphoundecaprenol (alpha-L-Ara4N-phosphoundecaprenol) from the cytoplasmic to the periplasmic side of the inner membrane. This is Probable 4-amino-4-deoxy-L-arabinose-phosphoundecaprenol flippase subunit ArnE from Yersinia pseudotuberculosis serotype O:3 (strain YPIII).